The chain runs to 53 residues: Antilisterial bacteriocin subtilosin biosynthesis protein AlbB (53 aa).

Transmembrane regions (helical) follow at residues 8–28 (ILLY…FVKS) and 30–50 (YLFT…ARKA).

Its subcellular location is the cell membrane. In terms of biological role, involved in the production of the bacteriocin subtilosin. Required for maximal production and for optimal immunity to subtilosin. The chain is Antilisterial bacteriocin subtilosin biosynthesis protein AlbB (albB) from Bacillus subtilis (strain 168).